A 260-amino-acid polypeptide reads, in one-letter code: Pyridoxine 5'-phosphate synthase (260 aa).

Residue asparagine 15 participates in 3-amino-2-oxopropyl phosphate binding. A 1-deoxy-D-xylulose 5-phosphate-binding site is contributed by 17-18; that stretch reads DH. Residue arginine 26 participates in 3-amino-2-oxopropyl phosphate binding. Residue histidine 51 is the Proton acceptor of the active site. Arginine 53 and histidine 58 together coordinate 1-deoxy-D-xylulose 5-phosphate. Catalysis depends on glutamate 78, which acts as the Proton acceptor. Threonine 108 lines the 1-deoxy-D-xylulose 5-phosphate pocket. Histidine 199 functions as the Proton donor in the catalytic mechanism. 3-amino-2-oxopropyl phosphate contacts are provided by residues glycine 200 and 221–222; that span reads GH.

Belongs to the PNP synthase family. As to quaternary structure, homooctamer; tetramer of dimers.

It localises to the cytoplasm. It carries out the reaction 3-amino-2-oxopropyl phosphate + 1-deoxy-D-xylulose 5-phosphate = pyridoxine 5'-phosphate + phosphate + 2 H2O + H(+). The protein operates within cofactor biosynthesis; pyridoxine 5'-phosphate biosynthesis; pyridoxine 5'-phosphate from D-erythrose 4-phosphate: step 5/5. Its function is as follows. Catalyzes the complicated ring closure reaction between the two acyclic compounds 1-deoxy-D-xylulose-5-phosphate (DXP) and 3-amino-2-oxopropyl phosphate (1-amino-acetone-3-phosphate or AAP) to form pyridoxine 5'-phosphate (PNP) and inorganic phosphate. In Cupriavidus necator (strain ATCC 17699 / DSM 428 / KCTC 22496 / NCIMB 10442 / H16 / Stanier 337) (Ralstonia eutropha), this protein is Pyridoxine 5'-phosphate synthase.